We begin with the raw amino-acid sequence, 83 residues long: Large ribosomal subunit protein eL14 (83 aa).

The protein belongs to the eukaryotic ribosomal protein eL14 family. Part of the 50S ribosomal subunit.

The polypeptide is Large ribosomal subunit protein eL14 (Thermococcus kodakarensis (strain ATCC BAA-918 / JCM 12380 / KOD1) (Pyrococcus kodakaraensis (strain KOD1))).